The chain runs to 369 residues: Methionine aminopeptidase 1B, chloroplastic (369 aa).

Residues 1–61 constitute a chloroplast transit peptide; sequence MASSVFLSSF…YSPRQFHVSA (61 aa). His199 provides a ligand contact to substrate. A divalent metal cation is bound by residues Asp216, Asp227, and His290. Residue His297 participates in substrate binding. Positions 322 and 353 each coordinate a divalent metal cation.

The protein belongs to the peptidase M24A family. Methionine aminopeptidase type 1 subfamily. Requires Co(2+) as cofactor. Zn(2+) is required as a cofactor. It depends on Mn(2+) as a cofactor. The cofactor is Fe(2+). As to expression, ubiquitous. Preferentially expressed in green tissues.

The protein localises to the plastid. Its subcellular location is the chloroplast. It catalyses the reaction Release of N-terminal amino acids, preferentially methionine, from peptides and arylamides.. In terms of biological role, removes the N-terminal methionine from nascent proteins. The N-terminal methionine is often cleaved when the second residue in the primary sequence is small and uncharged (Met-Ala-, Cys, Gly, Pro, Ser, Thr, or Val). In Arabidopsis thaliana (Mouse-ear cress), this protein is Methionine aminopeptidase 1B, chloroplastic (MAP1B).